A 70-amino-acid polypeptide reads, in one-letter code: Cold shock-like protein CspJ (70 aa).

The CSD domain occupies 7 to 67; it reads GLVKWFNPEK…GPKGPSAVNV (61 aa).

Its subcellular location is the cytoplasm. The polypeptide is Cold shock-like protein CspJ (cspJ) (Salmonella typhimurium (strain SL1344)).